The sequence spans 599 residues: MRTTLRLHIIKDGEQDNQFMILFDPSSSISLLKEKVQETYKSLYPFESNINIRNIKNEESYDIPNEYLVGEIFPTNSKVIVESFSSPLKKLDGTMINFKEKNIQHDLDGVENDFATVQSASNGVHAINGKRTHPDESENPRKLPKKNFVEAIDANSPGFVYRPTSIRDRAYSISSNHDNESTLTEGIALKEIESPDKDRKADGIVNLSVTQEEDDNHQSFNSSLTPSQPTTYNRANFFSINDASSDSSSDAPLRTLSSPSRLRMKDNDRKYLVEHSPAALIKESETIDGIDDKSLRSSTREVSVESPNEDSVNDDSSSDVSDEKETEAKHEIRAPAIIVRETSSHPSTAVPSENDTTESENDTLSESSTTSISSSPSENSDTSDDLTKVDSPNKSLVNDNVSAKHDKESENGKSKFPPPSQTLVTTSTISAAGNEPSDEIGSENDSDSDSDSDSSVPLSQLQKKSQQRNSVSHEIQNRGTKGSPKEPKAKPSTERPETHRTLSYSRLSELSKTFSPEIREPSLTKKTAVSMQESKEEGRSDESSESEESGSSSDESDNSEKEDRSNPIPVEKRASTVLNTKKKRKAKRNSALAGLAALV.

S174 is subject to Phosphoserine. Disordered stretches follow at residues 210-262 (TQEE…PSRL) and 292-599 (DKSL…AALV). Residues 218–241 (QSFNSSLTPSQPTTYNRANFFSIN) are compositionally biased toward polar residues. Low complexity predominate over residues 242–251 (DASSDSSSDA). Residues 292–303 (DKSLRSSTREVS) show a composition bias toward basic and acidic residues. S306 carries the post-translational modification Phosphoserine. Residues 307-320 (PNEDSVNDDSSSDV) are compositionally biased toward acidic residues. Residues 321–333 (SDEKETEAKHEIR) show a composition bias toward basic and acidic residues. The span at 344 to 354 (SHPSTAVPSEN) shows a compositional bias: polar residues. The segment covering 364–380 (LSESSTTSISSSPSENS) has biased composition (low complexity). The span at 390–401 (DSPNKSLVNDNV) shows a compositional bias: polar residues. Residues 402–413 (SAKHDKESENGK) show a composition bias toward basic and acidic residues. Polar residues predominate over residues 421-431 (QTLVTTSTISA). Residues 436–452 (PSDEIGSENDSDSDSDS) are compositionally biased toward acidic residues. Residues 456–480 (VPLSQLQKKSQQRNSVSHEIQNRGT) are compositionally biased toward polar residues. Basic and acidic residues predominate over residues 483 to 500 (SPKEPKAKPSTERPETHR). Residues 501-514 (TLSYSRLSELSKTF) show a composition bias toward polar residues. T513 bears the Phosphothreonine mark. 2 stretches are compositionally biased toward basic and acidic residues: residues 533–542 (ESKEEGRSDE) and 558–574 (NSEK…EKRA).

Post-translationally, phosphorylated by clp1.

The protein localises to the cytoplasm. Its subcellular location is the nucleus. It is found in the nucleolus. It localises to the cytoskeleton. The protein resides in the spindle. Functionally, negatively regulates the septation initiation network (SIN) pathway, independently of the cdc14 phosphatase clp1. May also have a role in silencing rDNA transcription. Required for maintaining the exclusive nucleolus localization of nuc1. This chain is Nucleolar protein dnt1 (dnt1), found in Schizosaccharomyces pombe (strain 972 / ATCC 24843) (Fission yeast).